An 84-amino-acid chain; its full sequence is Small ribosomal subunit protein uS17 (84 aa).

This sequence belongs to the universal ribosomal protein uS17 family. In terms of assembly, part of the 30S ribosomal subunit.

Functionally, one of the primary rRNA binding proteins, it binds specifically to the 5'-end of 16S ribosomal RNA. The polypeptide is Small ribosomal subunit protein uS17 (Aliivibrio fischeri (strain ATCC 700601 / ES114) (Vibrio fischeri)).